The chain runs to 367 residues: Zinc metalloproteinase nas-22 (367 aa).

Positions 1–16 are cleaved as a signal peptide; that stretch reads MKSFFILLSILQECYG. The Peptidase M12A domain occupies 41-237; that stretch reads VLIRGSDEER…LMINKYYECS (197 aa). N56 and N85 each carry an N-linked (GlcNAc...) asparagine glycan. Cystine bridges form between C88-C236, C111-C130, C238-C258, and C260-C269. H138 is a Zn(2+) binding site. E139 is a catalytic residue. Positions 142 and 148 each coordinate Zn(2+). Residues N169, N241, and N254 are each glycosylated (N-linked (GlcNAc...) asparagine). In terms of domain architecture, EGF-like spans 232 to 270; it reads KYYECSCANNLSCKNHGYPNPSNCSQCNCPYGFGGADCS. 2 N-linked (GlcNAc...) asparagine glycosylation sites follow: N287 and N322.

The cofactor is Zn(2+). As to expression, expressed in uterine seam (utse) cell.

It is found in the secreted. Functionally, metalloprotease. The protein is Zinc metalloproteinase nas-22 (nas-22) of Caenorhabditis elegans.